Consider the following 69-residue polypeptide: Large ribosomal subunit protein uL29 (69 aa).

The protein belongs to the universal ribosomal protein uL29 family.

The polypeptide is Large ribosomal subunit protein uL29 (Staphylococcus aureus (strain Mu3 / ATCC 700698)).